An 849-amino-acid chain; its full sequence is MVRLGSYCEHNGSISQAWLDSGLSPCFYFTLVPSVLLSFSFLLGALQSALYARHSTTMEPKYIPRSRLYRLQIVLSVVLILQSVIGLIWQAAGTDVVYGYMIVHGCLSVVAWGFSLWLLHLERTRALVREKSRGHGVVLLLFWALAFAAENLAFISWQSPNWWWLSRDTVPQKVQFGLWITRYVCTLFLFVLGIRAPGRPRKPYIVLINEDERDVETSQPLLRDPNQSTWQGFKKKLLLVMQYIWPRRNIPLQLLVALCMGLMGLERAINVFVPIYAKKIVDGLTEDSTWNILAVTVCIYVLLKFLQGGGAGTTGFLSNLRTFMWIRVQQFTNREVQIRLFAHLHSLSLRWHLGRKTGEVLRSVDRGTSSINSLLSYIVFSILPTIADIVIGIVYFTSSFNAWFGLIIFVCMTLYLTLTIIITEWRTKYRREMNTRDNEAKSRAVDSLLNFETVKYYNAEGYEVGRFNDSIMKYQVSEWKVNASLAMLNQTQNLIIGLGLLAGSLLCAYFVTENKFKVGDYVLFGTYIIQLYTPLNWFGTYYRMIQSSFIDMENMFELFNEDQEVKDAVNAPALMFRSGKIEFENVHFSYLDGKEILRDISFTVMPGQSIALVGPSGSGKSTIIRLLFRFYDVKGGTIKVDGQDISTVRQESLRSHIGVVPQDTVLFNDTIRNNIRYGRVSATDDEVEEAAAAADIHERILSFRDGYDTQTGERGLKLSGGEKQRVAIARTILKAPQIILLDEATSALDTETERNIQASLAKVCANRTTIVVAHRLSTVINSDQILVLKEGQIVERGRHEELLLKGGVYAGMWQKQQSGSESSSDSDSERKDRTSEKLQPPKATPRRGH.

Topologically, residues 1–25 (MVRLGSYCEHNGSISQAWLDSGLSP) are lumenal. The interval 1–195 (MVRLGSYCEH…TLFLFVLGIR (195 aa)) is required for the lysosomal targeting. The segment at 1–227 (MVRLGSYCEH…SQPLLRDPNQ (227 aa)) is required for ATPase activity. Cys8 and Cys26 are disulfide-bonded. N-linked (GlcNAc...) asparagine glycosylation is present at Asn11. The helical transmembrane segment at 26–46 (CFYFTLVPSVLLSFSFLLGAL) threads the bilayer. The Cytoplasmic segment spans residues 47 to 72 (QSALYARHSTTMEPKYIPRSRLYRLQ). Residues 73-93 (IVLSVVLILQSVIGLIWQAAG) form a helical membrane-spanning segment. Residues 94 to 98 (TDVVY) are Lumenal-facing. The helical transmembrane segment at 99–119 (GYMIVHGCLSVVAWGFSLWLL) threads the bilayer. At 120–136 (HLERTRALVREKSRGHG) the chain is on the cytoplasmic side. Residues 137–157 (VVLLLFWALAFAAENLAFISW) traverse the membrane as a helical segment. Topologically, residues 158 to 173 (QSPNWWWLSRDTVPQK) are lumenal. A helical transmembrane segment spans residues 174 to 194 (VQFGLWITRYVCTLFLFVLGI). The Cytoplasmic portion of the chain corresponds to 195–254 (RAPGRPRKPYIVLINEDERDVETSQPLLRDPNQSTWQGFKKKLLLVMQYIWPRRNIPLQL). A helical membrane pass occupies residues 255 to 275 (LVALCMGLMGLERAINVFVPI). One can recognise an ABC transmembrane type-1 domain in the interval 256 to 547 (VALCMGLMGL…FGTYYRMIQS (292 aa)). Residues 276 to 291 (YAKKIVDGLTEDSTWN) are Lumenal-facing. A helical membrane pass occupies residues 292–312 (ILAVTVCIYVLLKFLQGGGAG). The Cytoplasmic portion of the chain corresponds to 313-373 (TTGFLSNLRT…VDRGTSSINS (61 aa)). Residues 374–394 (LLSYIVFSILPTIADIVIGIV) traverse the membrane as a helical segment. Residues 395–401 (YFTSSFN) lie on the Lumenal side of the membrane. A helical transmembrane segment spans residues 402–422 (AWFGLIIFVCMTLYLTLTIII). At 423–492 (TEWRTKYRRE…ASLAMLNQTQ (70 aa)) the chain is on the cytoplasmic side. A helical transmembrane segment spans residues 493 to 513 (NLIIGLGLLAGSLLCAYFVTE). At 514 to 520 (NKFKVGD) the chain is on the lumenal side. A helical transmembrane segment spans residues 521 to 541 (YVLFGTYIIQLYTPLNWFGTY). Residues 542–849 (YRMIQSSFID…PPKATPRRGH (308 aa)) lie on the Cytoplasmic side of the membrane. The region spanning 581–815 (IEFENVHFSY…GGVYAGMWQK (235 aa)) is the ABC transporter domain. ATP is bound by residues Tyr590 and 614–625 (GPSGSGKSTIIR). Residues 814 to 825 (QKQQSGSESSSD) show a composition bias toward low complexity. A disordered region spans residues 814–849 (QKQQSGSESSSDSDSERKDRTSEKLQPPKATPRRGH). The span at 827–836 (DSERKDRTSE) shows a compositional bias: basic and acidic residues.

It belongs to the ABC transporter superfamily. ABCB family. Heavy Metal importer (TC 3.A.1.210) subfamily. Homodimer. Post-translationally, N-glycosylated.

Its subcellular location is the cell membrane. It localises to the mitochondrion outer membrane. It is found in the endoplasmic reticulum membrane. The protein resides in the golgi apparatus membrane. The protein localises to the endosome membrane. Its subcellular location is the lysosome membrane. It localises to the late endosome membrane. It is found in the early endosome membrane. The protein resides in the secreted. The protein localises to the extracellular exosome. Its subcellular location is the mitochondrion. It localises to the endosome. It is found in the multivesicular body membrane. The protein resides in the melanosome membrane. The catalysed reaction is heme b(in) + ATP + H2O = heme b(out) + ADP + phosphate + H(+). It catalyses the reaction coproporphyrin III(in) + ATP + H2O = coproporphyrin III(out) + ADP + phosphate + H(+). It carries out the reaction pheophorbide a(in) + ATP + H2O = pheophorbide a(out) + ADP + phosphate + H(+). The enzyme catalyses coproporphyrinogen III(in) + ATP + H2O = coproporphyrinogen III(out) + ADP + phosphate + H(+). The catalysed reaction is protoporphyrin IX(in) + ATP + H2O = protoporphyrin IX(out) + ADP + phosphate + H(+). It catalyses the reaction coproporphyrin I(in) + ATP + H2O = coproporphyrin I(out) + ADP + phosphate + H(+). It carries out the reaction uroporphyrin I(in) + ATP + H2O = uroporphyrin I(out) + ADP + phosphate + H(+). The enzyme catalyses uroporphyrin III(in) + ATP + H2O = uroporphyrin III(out) + ADP + phosphate + H(+). In terms of biological role, ATP-dependent transporter that catalyzes the transport of a broad-spectrum of porphyrins from the cytoplasm to the extracellular space through the plasma membrane or into the vesicle lumen. May also function as an ATP-dependent importer of porphyrins from the cytoplasm into the mitochondria, in turn may participate in the de novo heme biosynthesis regulation and in the coordination of heme and iron homeostasis during phenylhydrazine stress. May also play a key role in the early steps of melanogenesis producing PMEL amyloid fibrils. In vitro, it confers to cells a resistance to toxic metal such as arsenic and cadmium and against chemotherapeutics agent such as 5-fluorouracil, SN-38 and vincristin. In addition may play a role in the transition metal homeostasis. In Xenopus tropicalis (Western clawed frog), this protein is ATP-binding cassette sub-family B member 6 (abcb6).